The primary structure comprises 108 residues: Insertion element IS629 uncharacterized 12 kDa protein S4062 (108 aa).

The protein belongs to the transposase 8 family.

The polypeptide is Insertion element IS629 uncharacterized 12 kDa protein S4062 (Shigella flexneri).